The following is a 207-amino-acid chain: CASP-like protein F16 (207 aa).

Residues 1–30 form a disordered region; sequence MEKSEKGNGVAPATRSPMALMGSSRNENQE. At 1–37 the chain is on the cytoplasmic side; the sequence is MEKSEKGNGVAPATRSPMALMGSSRNENQEVNTSMRT. The chain crosses the membrane as a helical span at residues 38–58; it reads AETMLRLVPMALGVAALVVML. Topologically, residues 59 to 79 are extracellular; the sequence is KNSQSNDFGSVSYSDLGAFRY. Residues 80 to 100 form a helical membrane-spanning segment; that stretch reads LVHANGICAGYSLLSAIIAAV. Topologically, residues 101 to 108 are cytoplasmic; it reads PSPSTMPR. Residues 109 to 129 traverse the membrane as a helical segment; it reads AWTFFLLDQILTYVILGAAAV. The Extracellular segment spans residues 130 to 159; the sequence is STEVLYLANKGDSAITWSAACGTFAGFCHK. The chain crosses the membrane as a helical span at residues 160 to 180; sequence ATIAVVITFVAVICYAVLSLV. Residues 181-207 are Cytoplasmic-facing; it reads SSYRLFTKFDAPVNYPSKTIEATVFHG.

This sequence belongs to the Casparian strip membrane proteins (CASP) family. Homodimer and heterodimers.

The protein resides in the cell membrane. The chain is CASP-like protein F16 (F16) from Gossypium hirsutum (Upland cotton).